The sequence spans 514 residues: Threonine synthase (514 aa).

The residue at position 124 (lysine 124) is an N6-(pyridoxal phosphate)lysine. Pyridoxal 5'-phosphate is bound by residues glycine 277, asparagine 278, phenylalanine 279, aspartate 281, and threonine 449. A Phosphoserine modification is found at serine 467.

This sequence belongs to the threonine synthase family. The cofactor is pyridoxal 5'-phosphate.

It catalyses the reaction O-phospho-L-homoserine + H2O = L-threonine + phosphate. Its pathway is amino-acid biosynthesis; L-threonine biosynthesis; L-threonine from L-aspartate: step 5/5. Catalyzes the gamma-elimination of phosphate from L-phosphohomoserine and the beta-addition of water to produce L-threonine. The sequence is that of Threonine synthase (THR4) from Saccharomyces cerevisiae (strain ATCC 204508 / S288c) (Baker's yeast).